The sequence spans 379 residues: Putative F-box protein At5g62660 (379 aa).

The region spanning 35–84 (ALVAPEIPLDLLIEILTKLPAKSLMRFKCVSKLWSSLIRSRFFSNCYLTV) is the F-box domain.

The protein is Putative F-box protein At5g62660 of Arabidopsis thaliana (Mouse-ear cress).